The chain runs to 651 residues: p-hydroxybenzoic acid efflux pump subunit AaeB (651 aa).

11 helical membrane-spanning segments follow: residues 11–31, 41–61, 67–87, 91–111, 119–139, 150–170, 368–388, 405–425, 429–449, 455–475, and 481–501; these read FAFK…HLQL, AAIV…SGAI, LRII…VLTI, VLTL…SSLV, FGLA…TPLL, EIVL…PRSI, LFWL…IAVV, FLVG…FIIP, QSML…GIEV, GSLG…PMIF, and LDSA…LLLI.

This sequence belongs to the aromatic acid exporter ArAE (TC 2.A.85) family.

Its subcellular location is the cell inner membrane. Forms an efflux pump with AaeA. Could function as a metabolic relief valve, allowing to eliminate certain compounds when they accumulate to high levels in the cell. The chain is p-hydroxybenzoic acid efflux pump subunit AaeB from Yersinia pseudotuberculosis serotype O:1b (strain IP 31758).